The following is a 436-amino-acid chain: Hydrogenobyrinate a,c-diamide synthase (436 aa).

The region spanning 244-435 is the GATase cobBQ-type domain; sequence RIAVARDDAF…MHVIDFSGEA (192 aa). The active-site Nucleophile is the cysteine 327.

Belongs to the CobB/CbiA family. Mg(2+) serves as cofactor.

The enzyme catalyses hydrogenobyrinate + 2 L-glutamine + 2 ATP + 2 H2O = hydrogenobyrinate a,c-diamide + 2 L-glutamate + 2 ADP + 2 phosphate + 2 H(+). It functions in the pathway cofactor biosynthesis; adenosylcobalamin biosynthesis; cob(II)yrinate a,c-diamide from precorrin-2 (aerobic route): step 9/10. In terms of biological role, catalyzes the ATP-dependent amidation of the two carboxylate groups at positions a and c of hydrogenobyrinate, using either L-glutamine or ammonia as the nitrogen source. This is Hydrogenobyrinate a,c-diamide synthase from Brucella suis biovar 1 (strain 1330).